A 416-amino-acid chain; its full sequence is MLSLILFFPSFAFAATPVTPYYGPGHITFDWCGFGDSRSDCTNPQSPMSLDIPQQLCPKFSSKSSSSMFLSLHWNNHSSFVSYDYFNCGVEKVFYEGVNFSPRKQYSCWDEGVDGWIELKTRFYTKLYQMATTSRCIKLIQLQAPSSLPTLQAGVCRTNKQLPDNPRLALLSDTVPTSVQFVLPGSSGTTICTKHLVPFCYLNHGCFTTGGSCLPFGVSYVSDSFYYGYYDATPQIGSTESHDYVCDYLFMEPGTYNASTVGKFLVYPTKSYCMDTMNITVPVQAVQSIWSEQYASDDAIGQACKAPYCIFYNKTTPYTVTNGSDANHGDDEVRMMMQGLLRNSSCISPQGSTPLALYSTEMIYEPNYGSCPQFYKLFDTSGNENIDVISSSYFVATWVLLVVVVILIFVIISFFC.

The first 14 residues, 1-14 (MLSLILFFPSFAFA), serve as a signal peptide directing secretion. The segment at 4–121 (LILFFPSFAF…GVDGWIELKT (118 aa)) is esterase domain first part. The Virion surface segment spans residues 15–393 (ATPVTPYYGP…ENIDVISSSY (379 aa)). Ser37 serves as the catalytic Nucleophile. The cysteines at positions 41 and 57 are disulfide-linked. Asn76 carries an N-linked (GlcNAc...) asparagine; by host glycan. 3 disulfide bridges follow: Cys88/Cys136, Cys200/Cys246, and Cys206/Cys213. The tract at residues 122–263 (RFYTKLYQMA…GTYNASTVGK (142 aa)) is receptor binding. 2 N-linked (GlcNAc...) asparagine; by host glycosylation sites follow: Asn257 and Asn278. The esterase domain second part stretch occupies residues 264–379 (FLVYPTKSYC…SCPQFYKLFD (116 aa)). An intrachain disulfide couples Cys304 to Cys309. 2 N-linked (GlcNAc...) asparagine; by host glycosylation sites follow: Asn313 and Asn322. Active-site charge relay system residues include Asp325 and His328. Residue Asn343 is glycosylated (N-linked (GlcNAc...) asparagine; by host). Cys346 and Cys371 are disulfide-bonded. The chain crosses the membrane as a helical span at residues 394 to 414 (FVATWVLLVVVVILIFVIISF). The Intravirion segment spans residues 415–416 (FC).

This sequence belongs to the influenza type C/coronaviruses hemagglutinin-esterase family.

The protein localises to the virion membrane. It localises to the host cell membrane. The enzyme catalyses N-acetyl-9-O-acetylneuraminate + H2O = N-acetylneuraminate + acetate + H(+). It carries out the reaction N-acetyl-4-O-acetylneuraminate + H2O = N-acetylneuraminate + acetate + H(+). Structural protein that makes short spikes at the surface of the virus. Contains receptor binding and receptor-destroying activities. Mediates de-O-acetylation of N-acetyl-9-di-O-acetylneuraminic acid, which is probably the receptor determinant recognized by the virus on the surface of erythrocytes and susceptible cells. Also hydrolyzes 5-N-acetyl-4-O-acetylneuraminic acid and N-acetyl-9-O-acetylneuraminic acid, but displays a substrate preference for N-acetyl-9-di-O-acetylneuraminic acid. This receptor-destroying activity is important for virus release as it probably helps preventing self-aggregation and ensures the efficient spread of the progeny virus from cell to cell. May serve as a secondary viral attachment protein for initiating infection, the spike protein being the major one. Seems to be a 'luxury' protein that is not absolutely necessary for virus infection in culture. However, its presence in the virus may alter its pathogenicity. May become a target for both the humoral and the cellular branches of the immune system. The polypeptide is Hemagglutinin-esterase (HE) (Breda virus 1 (BRV-1)).